The chain runs to 333 residues: Lipoyl synthase (333 aa).

A compositionally biased stretch (polar residues) spans 1–15 (MSTLVESPVPSNDSQ). A disordered region spans residues 1–34 (MSTLVESPVPSNDSQAAAPAAYDPTQKQKSQAKT). [4Fe-4S] cluster-binding residues include Cys-80, Cys-85, Cys-91, Cys-106, Cys-110, Cys-113, and Ser-320. One can recognise a Radical SAM core domain in the interval 91–309 (CFGKGTATFM…EREAYAMGFT (219 aa)).

Belongs to the radical SAM superfamily. Lipoyl synthase family. Requires [4Fe-4S] cluster as cofactor.

Its subcellular location is the cytoplasm. It carries out the reaction [[Fe-S] cluster scaffold protein carrying a second [4Fe-4S](2+) cluster] + N(6)-octanoyl-L-lysyl-[protein] + 2 oxidized [2Fe-2S]-[ferredoxin] + 2 S-adenosyl-L-methionine + 4 H(+) = [[Fe-S] cluster scaffold protein] + N(6)-[(R)-dihydrolipoyl]-L-lysyl-[protein] + 4 Fe(3+) + 2 hydrogen sulfide + 2 5'-deoxyadenosine + 2 L-methionine + 2 reduced [2Fe-2S]-[ferredoxin]. The protein operates within protein modification; protein lipoylation via endogenous pathway; protein N(6)-(lipoyl)lysine from octanoyl-[acyl-carrier-protein]: step 2/2. Functionally, catalyzes the radical-mediated insertion of two sulfur atoms into the C-6 and C-8 positions of the octanoyl moiety bound to the lipoyl domains of lipoate-dependent enzymes, thereby converting the octanoylated domains into lipoylated derivatives. This Bordetella bronchiseptica (strain ATCC BAA-588 / NCTC 13252 / RB50) (Alcaligenes bronchisepticus) protein is Lipoyl synthase.